A 777-amino-acid chain; its full sequence is 5-methyltetrahydropteroyltriglutamate--homocysteine methyltransferase (777 aa).

5-methyltetrahydropteroyltri-L-glutamate-binding positions include 17–20 (RELK) and K132. L-homocysteine-binding positions include 455 to 457 (IGS) and E508. L-methionine is bound by residues 455-457 (IGS) and E508. Residues 539-540 (RC) and W585 each bind 5-methyltetrahydropteroyltri-L-glutamate. Position 623 (D623) interacts with L-homocysteine. Position 623 (D623) interacts with L-methionine. E629 serves as a coordination point for 5-methyltetrahydropteroyltri-L-glutamate. 3 residues coordinate Zn(2+): H665, C667, and E689. The Proton donor role is filled by H718. Position 750 (C750) interacts with Zn(2+).

This sequence belongs to the vitamin-B12 independent methionine synthase family. It depends on Zn(2+) as a cofactor.

It carries out the reaction 5-methyltetrahydropteroyltri-L-glutamate + L-homocysteine = tetrahydropteroyltri-L-glutamate + L-methionine. The protein operates within amino-acid biosynthesis; L-methionine biosynthesis via de novo pathway; L-methionine from L-homocysteine (MetE route): step 1/1. Functionally, catalyzes the transfer of a methyl group from 5-methyltetrahydrofolate to homocysteine resulting in methionine formation. In Caulobacter vibrioides (strain ATCC 19089 / CIP 103742 / CB 15) (Caulobacter crescentus), this protein is 5-methyltetrahydropteroyltriglutamate--homocysteine methyltransferase.